An 89-amino-acid polypeptide reads, in one-letter code: DNA/RNA-binding protein Alba (89 aa).

Belongs to the histone-like Alba family.

It is found in the cytoplasm. The protein localises to the chromosome. In terms of biological role, binds double-stranded DNA tightly but without sequence specificity. Involved in DNA compaction. The protein is DNA/RNA-binding protein Alba of Methanothrix thermoacetophila (strain DSM 6194 / JCM 14653 / NBRC 101360 / PT) (Methanosaeta thermophila).